The sequence spans 365 residues: Phosphatidylcholine:ceramide cholinephosphotransferase 2 (365 aa).

Positions 9–50 (LEGHLESQTNDSTNTYTSPTEAVEEEGKNGKGKPKTLSNGLR) are disordered. Polar residues predominate over residues 14–28 (ESQTNDSTNTYTSPT). The next 5 helical transmembrane spans lie at 80-100 (GIAF…ITVV), 128-148 (FSVS…QWLF), 159-179 (FFFI…VTTL), 219-239 (ILCG…TYLF), and 248-268 (FWWY…CILV). The active site involves H229. Residues H272 and D276 contribute to the active site. A helical transmembrane segment spans residues 273 to 290 (YTVDVIIAYYITTRLFWW). The Cytoplasmic portion of the chain corresponds to 291–365 (YHSMANEKNL…KIGEDNEKST (75 aa)). S-palmitoyl cysteine attachment occurs at residues C331, C332, C343, and C348.

Belongs to the sphingomyelin synthase family. Post-translationally, palmitoylated on Cys-331, Cys-332, Cys-343 and Cys-348; which plays an important role in plasma membrane localization. In terms of tissue distribution, highest expression is detected in cortical bone, followed by vertebrae, kidney and liver. Expression levels are very low in spleen, muscle, heart, brown fat and thymus. Expressed in macrophages.

The protein resides in the cell membrane. The protein localises to the golgi apparatus membrane. The enzyme catalyses an N-acylsphing-4-enine + a 1,2-diacyl-sn-glycero-3-phosphocholine = a sphingomyelin + a 1,2-diacyl-sn-glycerol. It carries out the reaction an N-acylsphinganine + a 1,2-diacyl-sn-glycero-3-phosphocholine = an N-acylsphinganine-1-phosphocholine + a 1,2-diacyl-sn-glycerol. The catalysed reaction is an N-acyl-(4R)-4-hydroxysphinganine + a 1,2-diacyl-sn-glycero-3-phosphocholine = an N-acyl-(4R)-4-hydroxysphinganine-phosphocholine + a 1,2-diacyl-sn-glycerol. It catalyses the reaction an N-acylsphing-4-enine + a 1,2-diacyl-sn-glycero-3-phosphoethanolamine = an N-acylsphing-4-enine 1-phosphoethanolamine + a 1,2-diacyl-sn-glycerol. The enzyme catalyses an N-acylsphinganine + a 1,2-diacyl-sn-glycero-3-phosphoethanolamine = an N-acylsphinganine-1-phosphoethanolamine + a 1,2-diacyl-sn-glycerol. It carries out the reaction an N-acyl-(4R)-4-hydroxysphinganine + a 1,2-diacyl-sn-glycero-3-phosphoethanolamine = an N-acyl-(4R)-4-hydroxysphinganine-1-phosphoethanolamine + a 1,2-diacyl-sn-glycerol. The catalysed reaction is 1,2-dihexadecanoyl-sn-glycero-3-phosphocholine + an N-acylsphing-4-enine = 1,2-dihexadecanoyl-sn-glycerol + a sphingomyelin. It catalyses the reaction 1-(9Z-octadecenoyl)-2-acyl-sn-3-glycerol + a sphingomyelin = a 1-(9Z-octadecenoyl)-2-acyl-sn-glycero-3-phosphocholine + an N-acylsphing-4-enine. The enzyme catalyses N-hexadecanoylsphinganine + a 1,2-diacyl-sn-glycero-3-phosphocholine = N-hexadecanoyl-sphinganine-1-phosphocholine + a 1,2-diacyl-sn-glycerol. It carries out the reaction N-hexadecanoyl-(4R)-hydroxysphinganine + a 1,2-diacyl-sn-glycero-3-phosphocholine = N-hexadecanoyl-(4R)-hydroxysphinganine-phosphocholine + a 1,2-diacyl-sn-glycerol. The catalysed reaction is N-hexadecanoylsphinganine + a 1,2-diacyl-sn-glycero-3-phosphoethanolamine = N-hexadecanoyl-sphinganine-1-phosphoethanolamine + a 1,2-diacyl-sn-glycerol. It catalyses the reaction N-hexadecanoyl-(4R)-hydroxysphinganine + a 1,2-diacyl-sn-glycero-3-phosphoethanolamine = N-hexadecanoyl-(4R)-hydroxysphinganine-1-phosphoethanolamine + a 1,2-diacyl-sn-glycerol. The protein operates within sphingolipid metabolism. In terms of biological role, sphingomyelin synthase that primarily contributes to sphingomyelin synthesis and homeostasis at the plasma membrane. Catalyzes the reversible transfer of phosphocholine moiety in sphingomyelin biosynthesis: in the forward reaction transfers phosphocholine head group of phosphatidylcholine (PC) on to ceramide (CER) to form ceramide phosphocholine (sphingomyelin, SM) and diacylglycerol (DAG) as by-product, and in the reverse reaction transfers phosphocholine from SM to DAG to form PC and CER. The direction of the reaction appears to depend on the levels of CER and DAG in the plasma membrane. Does not use free phosphorylcholine or CDP-choline as donors. Can also transfer phosphoethanolamine head group of phosphatidylethanolamine (PE) on to ceramide (CER) to form ceramide phosphoethanolamine (CPE). Regulates receptor-mediated signal transduction via mitogenic DAG and proapoptotic CER, as well as via SM, a structural component of membrane rafts that serve as platforms for signal transduction and protein sorting. To a lesser extent, plays a role in secretory transport via regulation of DAG pool at the Golgi apparatus and its downstream effects on PRKD1. Required for normal bone matrix mineralization. This chain is Phosphatidylcholine:ceramide cholinephosphotransferase 2 (Sgms2), found in Mus musculus (Mouse).